A 731-amino-acid polypeptide reads, in one-letter code: Putative beta-galactosidase (731 aa).

The N-terminal stretch at 1–29 is a signal peptide; that stretch reads MLCGKENNVMKMMLVYVFVLITLISCVYG. The Proton donor role is filled by E187. E257 acts as the Nucleophile in catalysis.

This sequence belongs to the glycosyl hydrolase 35 family. Senescing flower petals.

It catalyses the reaction Hydrolysis of terminal non-reducing beta-D-galactose residues in beta-D-galactosides.. This Dianthus caryophyllus (Carnation) protein is Putative beta-galactosidase (CARSR12).